Here is a 163-residue protein sequence, read N- to C-terminus: UPF0587 protein CG4646 (163 aa).

Zn(2+) contacts are provided by Cys33, Cys36, Cys68, and Cys71.

This sequence belongs to the UPF0587 family.

In Drosophila melanogaster (Fruit fly), this protein is UPF0587 protein CG4646.